We begin with the raw amino-acid sequence, 136 residues long: Psoriasis susceptibility 1 candidate gene 2 protein (136 aa).

Residues 1 to 22 (MILNWKLLGILVLCLHTRGISG) form the signal peptide. The tract at residues 20–136 (ISGSEGHPSH…DLDPPREEYR (117 aa)) is disordered. Pro residues-rich tracts occupy residues 44 to 69 (PQGP…PTRP) and 84 to 116 (PEPP…PPAP). The span at 118-136 (VDNRPQEEPDLDPPREEYR) shows a compositional bias: basic and acidic residues.

In terms of tissue distribution, expressed in skin. Also expressed in heart and skeletal muscle.

The protein resides in the secreted. The polypeptide is Psoriasis susceptibility 1 candidate gene 2 protein (PSORS1C2) (Homo sapiens (Human)).